The following is a 605-amino-acid chain: UPF0313 protein GSU2873 (605 aa).

The Radical SAM core domain maps to 291–561 (AYEQIRASVT…LQKALLLWHL (271 aa)). [4Fe-4S] cluster is bound by residues Cys-305, Cys-309, and Cys-312. Positions 586 to 605 (GGAAGGGGGRSGSGFRPGRT) are disordered. Residues 587–597 (GAAGGGGGRSG) are compositionally biased toward gly residues.

It belongs to the UPF0313 family. Requires [4Fe-4S] cluster as cofactor.

The sequence is that of UPF0313 protein GSU2873 from Geobacter sulfurreducens (strain ATCC 51573 / DSM 12127 / PCA).